The sequence spans 198 residues: Na(+)-translocating NADH-quinone reductase subunit E (198 aa).

A run of 6 helical transmembrane segments spans residues 11-31, 39-59, 77-97, 110-130, 140-160, and 176-196; these read SIFI…FLAV, FGLG…NNLV, FLNF…LEMV, GIFL…SFMV, IVYG…LAGI, and LGIT…FSGV.

Belongs to the NqrDE/RnfAE family. Composed of six subunits; NqrA, NqrB, NqrC, NqrD, NqrE and NqrF. Post-translationally, the N-terminus is blocked.

It is found in the cell inner membrane. It carries out the reaction a ubiquinone + n Na(+)(in) + NADH + H(+) = a ubiquinol + n Na(+)(out) + NAD(+). With respect to regulation, this reaction is tightly coupled to the Na(+) pumping activity and specifically requires Na(+) for activity. Inhibited by korormicin and 2-N-heptyl-4-hydroxyquinoline N-oxide (HQNO). Its function is as follows. NQR complex catalyzes the reduction of ubiquinone-1 to ubiquinol by two successive reactions, coupled with the transport of Na(+) ions from the cytoplasm to the periplasm. NqrA to NqrE are probably involved in the second step, the conversion of ubisemiquinone to ubiquinol. The sequence is that of Na(+)-translocating NADH-quinone reductase subunit E from Vibrio alginolyticus.